The following is a 439-amino-acid chain: Gap junction gamma-2 protein (439 aa).

Over 1–25 the chain is Cytoplasmic; it reads MTNMSWSFLTRLLEEIHNHSTFVGK. Residues 26-46 form a helical membrane-spanning segment; it reads VWLTVLVVFRIVLTAVGGEAI. The Extracellular segment spans residues 47 to 78; the sequence is YSDEQAKFTCNTRQPGCDNVCYDAFAPLSHVR. Residues 79-99 form a helical membrane-spanning segment; the sequence is FWVFQIVVISTPSVMYLGYAV. At 100-216 the chain is on the cytoplasmic side; it reads HRLARASEQE…EGLMRVYVAQ (117 aa). The disordered stretch occupies residues 108–178; sequence QERRRALRRR…AEEAGAEEAC (71 aa). Basic residues predominate over residues 112 to 125; that stretch reads RALRRRPGPRRAPR. The span at 140–174 shows a compositional bias: acidic residues; that stretch reads DLGEEEPMLGLGEEEEEEETGAAEGAGEEAEEAGA. A helical membrane pass occupies residues 217 to 237; the sequence is LVARAAFEVAFLVGQYLLYGF. The Extracellular portion of the chain corresponds to 238 to 265; it reads EVRPFFPCSRQPCPHVVDCFVSRPTEKT. Residues 266-286 traverse the membrane as a helical segment; sequence VFLLVMYVVSCLCLLLNLCEM. The Cytoplasmic segment spans residues 287-439; that stretch reads AHLGLGSAQD…SRDGKTTVWI (153 aa). The tract at residues 364 to 439 is disordered; it reads AGDRDRDSSP…SRDGKTTVWI (76 aa). Ser-371 is modified (phosphoserine). The span at 378 to 393 shows a compositional bias: low complexity; sequence PAASRGPPRAGAPASR.

This sequence belongs to the connexin family. Gamma-type subfamily. In terms of assembly, a connexon is composed of a hexamer of connexins. Interacts with TJP1. In terms of tissue distribution, expressed in central nervous system, in sciatic nerve and sural nerve. Also detected in skeletal muscles.

Its subcellular location is the cell membrane. It localises to the cell junction. The protein resides in the gap junction. In terms of biological role, one gap junction consists of a cluster of closely packed pairs of transmembrane channels, the connexons, through which materials of low MW diffuse from one cell to a neighboring cell. May play a role in myelination in central and peripheral nervous systems. In Homo sapiens (Human), this protein is Gap junction gamma-2 protein (GJC2).